A 454-amino-acid chain; its full sequence is Histidine--tRNA ligase (454 aa).

This sequence belongs to the class-II aminoacyl-tRNA synthetase family. Homodimer.

The protein localises to the cytoplasm. It catalyses the reaction tRNA(His) + L-histidine + ATP = L-histidyl-tRNA(His) + AMP + diphosphate + H(+). The polypeptide is Histidine--tRNA ligase (Porphyromonas gingivalis (strain ATCC BAA-308 / W83)).